We begin with the raw amino-acid sequence, 547 residues long: Leiomodin-2 (547 aa).

Positions 1–47 (MSTFGYRRGLSKYESIDEDELLASLSAEELKELERELEDIEPDRNLP) are interaction with tropomyosin alpha. Interaction with actin stretches follow at residues 1-161 (MSTF…SDNS), 162-497 (KPKI…KEIK), and 521-540 (AHEN…LKRV). Phosphoserine occurs at positions 11, 15, and 24. Residues 16–41 (IDEDELLASLSAEELKELERELEDIE) adopt a coiled-coil conformation. 2 disordered regions span residues 91 to 162 (KVAE…DNSK) and 352 to 533 (MDKQ…RGSS). Acidic residues-rich tracts occupy residues 95–104 (DKEESEEELI) and 112–139 (VSEE…EEER). Residues 113–148 (SEEVYTEEEEEESQEEEEEEDSDEEERTIETAKGIN) are a coiled coil. The span at 149-160 (GTVNYDSVNSDN) shows a compositional bias: polar residues. Residues 352-367 (MDKQRQKRLQEQKQQE) show a composition bias toward basic and acidic residues. Serine 400 is modified (phosphoserine). Over residues 419 to 449 (ATPPPPPPPPPPPPPSSQRLPPPPPPPPPPL) the composition is skewed to pro residues. A compositionally biased stretch (polar residues) spans 465–475 (QQESAQRALQN). The segment covering 477 to 487 (QKKKKGKKVKK) has biased composition (basic residues). Positions 494–512 (KEIKNSLRSVQEKKMEDSS) are enriched in basic and acidic residues. Positions 521 to 540 (AHENLMEAIRGSSIKQLKRV) constitute a WH2 domain.

This sequence belongs to the tropomodulin family. Can bind at least three actin monomers and thereby provides a nucleus for actin filament formation. Interacts (via N-terminus) with tropomyosin alpha (TPM1) (via N-terminus). May also interact with TPM2 (via N-terminus). Interacts with FLII. As to expression, specifically expressed in heart and skeletal muscles, with higher levels in heart (at protein level). Not expressed in other tissues.

It localises to the cytoplasm. It is found in the myofibril. The protein resides in the sarcomere. Its subcellular location is the m line. The protein localises to the cytoskeleton. Its function is as follows. Mediates nucleation of actin filaments and thereby promotes actin polymerization. Plays a role in the regulation of actin filament length. Required for normal sarcomere organization in the heart, and for normal heart function. The chain is Leiomodin-2 (LMOD2) from Homo sapiens (Human).